The chain runs to 188 residues: MTNNLKQRRIILDLAVTLDGFIEGKNGEVDWCIMDPDMGFTDFLNQIDTILYGRKSFDLWGQYIPKNEDPDTEKELWKLVHSKKKYVFSRTQNEIDNQAIFINDNILEEVNKLKKNPGKDIWLYGGASLITTFINLGLVDEFRLSIHPVVLGEGKPLFIDVKQRINLKMVNTRTFSSGVVQIVYHWNG.

The helical transmembrane segment at 121-139 (IWLYGGASLITTFINLGLV) threads the bilayer.

To B.subtilis YwjB.

The protein resides in the membrane. This is an uncharacterized protein from Bacillus subtilis (strain 168).